We begin with the raw amino-acid sequence, 119 residues long: Protein SPIRAL1 (119 aa).

A compositionally biased stretch (gly residues) spans 1 to 11 (MGRGNSCGGGQ). Disordered stretches follow at residues 1–47 (MGRG…PPVT) and 85–105 (EGQNTGNFLTDRPSTKVHAAP). The segment covering 24 to 34 (APKPVPAPRPA) has biased composition (pro residues).

Belongs to the SPIRAL1 family. Ubiquitinated. Upon salt-stress induction, it is subject to proteasome-dependent degradation. Ubiquitous. High expression was associated with tissues undergoing rapid cell expansion, including the root elongation zone, hypocotyls of dark grown-seedlings, and cotyledons of light-grown seedlings.

The protein resides in the cytoplasm. The protein localises to the cytoskeleton. It is found in the phragmoplast. It localises to the spindle. In terms of biological role, required for directional control of cell elongation. Stabilizes growing ends of cortical microtubules and influences their dynamic properties. Acts redundantly with SP1Ls in maintaining the cortical microtubules organization essential for anisotropic cell growth. Plays a key role in salt stress-induced microtubules disassembly. This is Protein SPIRAL1 (SPR1) from Arabidopsis thaliana (Mouse-ear cress).